The primary structure comprises 472 residues: Interferon-induced protein with tetratricopeptide repeats 2 (472 aa).

S2 is subject to N-acetylserine. TPR repeat units lie at residues 51-89 (ATMCNLLAYLKHLKGQNEAALECLRKAEELIQQEHADQA), 90-135 (EIRS…RIES), 136-171 (PELDCEEGWTRLKCGGNQNERAKVCFEKALEKKPKN), 172-208 (PEFTSGLAIASYRLDNWPPSQNAIDPLRQAIRLNPDN), 247-280 (TDVLRSAAKFYRRKDEPDKAIELLKKALEYIPNN), 281-335 (AYLH…NLFR), 336-366 (VCSILASLHALADQYEDAEYYFQKEFSKELT), 367-405 (PVAKQLLHLRYGNFQLYQMKCEDKAIHHFIEGVKINQKS), and 406-448 (REKE…KMQQ). The tract at residues 446-472 (MQQADEDSERGLESGSLIPSASSWNGE) is disordered. Over residues 462-472 (LIPSASSWNGE) the composition is skewed to polar residues.

This sequence belongs to the IFIT family. In terms of assembly, domain-swapped homodimer. Component of an interferon-dependent multiprotein complex, at least composed of IFIT1, IFIT2 and IFIT3. Interacts with IFIT1 and IFIT3. Interacts with STING1/MITA and disrupts its interaction with MAVS or TBK1. Interacts with EIF3E and EIF3C.

It localises to the cytoplasm. The protein localises to the endoplasmic reticulum. In terms of biological role, IFN-induced antiviral protein which inhibits expression of viral messenger RNAs lacking 2'-O-methylation of the 5' cap. The ribose 2'-O-methylation would provide a molecular signature to distinguish between self and non-self mRNAs by the host during viral infection. Viruses evolved several ways to evade this restriction system such as encoding their own 2'-O-methylase for their mRNAs or by stealing host cap containing the 2'-O-methylation (cap snatching mechanism). Binds AU-rich viral RNAs, with or without 5' triphosphorylation, RNA-binding is required for antiviral activity. Can promote apoptosis. This is Interferon-induced protein with tetratricopeptide repeats 2 (IFIT2) from Homo sapiens (Human).